Consider the following 683-residue polypeptide: Elongation factor G 2 (683 aa).

The tr-type G domain maps to Gln4–Gln279. GTP contacts are provided by residues Ala13–Thr20, Asp77–His81, and Asn131–Asp134.

The protein belongs to the TRAFAC class translation factor GTPase superfamily. Classic translation factor GTPase family. EF-G/EF-2 subfamily.

The protein localises to the cytoplasm. Functionally, catalyzes the GTP-dependent ribosomal translocation step during translation elongation. During this step, the ribosome changes from the pre-translocational (PRE) to the post-translocational (POST) state as the newly formed A-site-bound peptidyl-tRNA and P-site-bound deacylated tRNA move to the P and E sites, respectively. Catalyzes the coordinated movement of the two tRNA molecules, the mRNA and conformational changes in the ribosome. This is Elongation factor G 2 (fusB) from Treponema pallidum (strain Nichols).